The chain runs to 508 residues: Probable polyol transporter 3 (508 aa).

Helical transmembrane passes span 21–41 (FAFG…YDTG), 60–80 (QIEV…LTAG), 90–110 (YTIA…GYGP), 120–140 (CIAG…SAEI), 147–167 (GFLT…GYVS), 178–198 (LGWR…AFGI), 280–300 (ILIA…EAVV), 318–338 (LLLA…IATF), 348–368 (LLLT…VSLT), 384–404 (IVST…ITWV), 418–438 (GASI…MSFL), and 448–468 (GVFF…FFML).

It belongs to the major facilitator superfamily. Sugar transporter (TC 2.A.1.1) family.

It localises to the membrane. Functionally, plasma membrane sugar-proton symporter. The protein is Probable polyol transporter 3 (PLT3) of Arabidopsis thaliana (Mouse-ear cress).